A 142-amino-acid polypeptide reads, in one-letter code: Large ribosomal subunit protein uL11 (142 aa).

This sequence belongs to the universal ribosomal protein uL11 family. In terms of assembly, part of the ribosomal stalk of the 50S ribosomal subunit. Interacts with L10 and the large rRNA to form the base of the stalk. L10 forms an elongated spine to which L12 dimers bind in a sequential fashion forming a multimeric L10(L12)X complex. In terms of processing, one or more lysine residues are methylated.

In terms of biological role, forms part of the ribosomal stalk which helps the ribosome interact with GTP-bound translation factors. The sequence is that of Large ribosomal subunit protein uL11 from Sinorhizobium fredii (strain NBRC 101917 / NGR234).